We begin with the raw amino-acid sequence, 288 residues long: UDP-3-O-acyl-N-acetylglucosamine deacetylase (288 aa).

Positions 79, 236, and 240 each coordinate Zn(2+). The active-site Proton donor is His263.

This sequence belongs to the LpxC family. Requires Zn(2+) as cofactor.

It catalyses the reaction a UDP-3-O-[(3R)-3-hydroxyacyl]-N-acetyl-alpha-D-glucosamine + H2O = a UDP-3-O-[(3R)-3-hydroxyacyl]-alpha-D-glucosamine + acetate. It functions in the pathway glycolipid biosynthesis; lipid IV(A) biosynthesis; lipid IV(A) from (3R)-3-hydroxytetradecanoyl-[acyl-carrier-protein] and UDP-N-acetyl-alpha-D-glucosamine: step 2/6. In terms of biological role, catalyzes the hydrolysis of UDP-3-O-myristoyl-N-acetylglucosamine to form UDP-3-O-myristoylglucosamine and acetate, the committed step in lipid A biosynthesis. This Rickettsia bellii (strain OSU 85-389) protein is UDP-3-O-acyl-N-acetylglucosamine deacetylase.